We begin with the raw amino-acid sequence, 291 residues long: Bis(5'-nucleosyl)-tetraphosphatase, symmetrical (291 aa).

It belongs to the Ap4A hydrolase family.

The catalysed reaction is P(1),P(4)-bis(5'-adenosyl) tetraphosphate + H2O = 2 ADP + 2 H(+). Functionally, hydrolyzes diadenosine 5',5'''-P1,P4-tetraphosphate to yield ADP. The sequence is that of Bis(5'-nucleosyl)-tetraphosphatase, symmetrical from Pseudomonas syringae pv. syringae (strain B728a).